The following is a 517-amino-acid chain: MAVSRKDWSALSSLARQRTLEDEEEQERERRRRHRNLSSTTDDEAPRLSQNGDRQASASERLPSVEEAEVPKPLPPASKDEDEDIQSILRTRQERRQRRQVVEAAQAPIQERLEAEEGRNSLSPVQATQKPLVSKKELEIPPRRRLSREQRGPWALEEESLVGREPEERKKGVPEKSPVLEKSSMPKKTAPEKSLVSDKTSISEKVLASEKTSLSEKIAVSEKRNSSEKKSVLEKTSVSEKSLAPGMALGSGRRLVSEKASIFEKALASEKSPTADAKPAPKRATASEQPLAQEPPASGGSPATTKEQRGRALPGKNLPSLAKQGASDPPTVASRLPPVTLQVKIPSKEEEADMSSPTQRTYSSSLKRSSPRTISFRMKPKKENSETTLTRSASMKLPDNTVKLGEKLERYHTAIRRSESVKSRGLPCTELFVAPVGVASKRHLFEKELAGQSRAEPASSRKENLRLSGVVTSRLNLWISRTQESGDQDPQEAQKASSATERTQWGQKSDSSLDAEV.

Residues 1 to 401 (MAVSRKDWSA…SASMKLPDNT (401 aa)) form a disordered region. The residue at position 38 (Ser-38) is a Phosphoserine. A compositionally biased stretch (polar residues) spans 48–58 (LSQNGDRQASA). Residues Ser-64, Ser-78, Ser-121, and Ser-123 each carry the phosphoserine modification. The span at 120–131 (NSLSPVQATQKP) shows a compositional bias: polar residues. Composition is skewed to basic and acidic residues over residues 134–151 (SKKE…REQR) and 161–174 (LVGR…KGVP). 8 SEK repeats span residues 203-205 (SEK), 209-211 (SEK), 215-217 (SEK), 221-223 (SEK), 227-229 (SEK), 239-241 (SEK), 257-259 (SEK), and 269-271 (SEK). Positions 203–271 (SEKVLASEKT…IFEKALASEK (69 aa)) are 8 X SEK repeats. A compositionally biased stretch (basic and acidic residues) spans 219-233 (AVSEKRNSSEKKSVL). 3 positions are modified to phosphoserine: Ser-347, Ser-356, and Ser-394. Residues 355–373 (SSPTQRTYSSSLKRSSPRT) show a composition bias toward polar residues. Arg-424 bears the Omega-N-methylarginine mark. A disordered region spans residues 481–517 (RTQESGDQDPQEAQKASSATERTQWGQKSDSSLDAEV). Ser-485 bears the Phosphoserine mark. Residues 494–517 (QKASSATERTQWGQKSDSSLDAEV) show a composition bias toward polar residues.

The protein localises to the secreted. The protein resides in the extracellular space. It is found in the extracellular matrix. It localises to the basement membrane. Anchoring filament protein which is a component of the basement membrane zone. The polypeptide is Ladinin-1 (LAD1) (Homo sapiens (Human)).